We begin with the raw amino-acid sequence, 118 residues long: MTDKVLKRKQLLKVKRKLRTRGKIFGRADKPRVSVFKSNKYFYAQAINDELGVTLASVDGKKLGLGNNKENAKQIANEFATSLKKAKITEVVFDRNGYLYHGVVAAFADTLRENGIKL.

This sequence belongs to the universal ribosomal protein uL18 family. Part of the 50S ribosomal subunit; part of the 5S rRNA/L5/L18/L25 subcomplex. Contacts the 5S and 23S rRNAs.

In terms of biological role, this is one of the proteins that bind and probably mediate the attachment of the 5S RNA into the large ribosomal subunit, where it forms part of the central protuberance. The protein is Large ribosomal subunit protein uL18 of Helicobacter hepaticus (strain ATCC 51449 / 3B1).